Consider the following 310-residue polypeptide: MSDINAVKHFLLSLQKDICQQLAAIDGGADFAEDEWQRAEGGGGCSRVLSGGRIFERTGVNFSHVTGKSLPPSASTHRPDLAGRSFQAMGVSLVIHPLSPYIPTSHANVRLFVAEKPGEEPVWWFGGGFDLTPYYGFKEDAVHWHQTAHDLCQPFGDDVYPRYKKWCDDYFFLKHRNEARGIGGLFFDDLNEPDFATSFAFIRAVGNGFLDGYLPIVERRKDLAWGERERDFQLYRRGRYVEFNLIWDRGTLFGLQSGGRTESILMSMPPLARWEYQHQPEPDSPEAALYRDFLPARDWLAESNTHNKEA.

Residue serine 92 participates in substrate binding. Positions 96 and 106 each coordinate a divalent metal cation. Histidine 106 serves as the catalytic Proton donor. 108-110 (NVR) lines the substrate pocket. The a divalent metal cation site is built by histidine 145 and histidine 175. The important for dimerization stretch occupies residues 240 to 275 (YVEFNLIWDRGTLFGLQSGGRTESILMSMPPLARWE). Residue 258-260 (GGR) participates in substrate binding.

This sequence belongs to the aerobic coproporphyrinogen-III oxidase family. In terms of assembly, homodimer. A divalent metal cation serves as cofactor.

Its subcellular location is the cytoplasm. The enzyme catalyses coproporphyrinogen III + O2 + 2 H(+) = protoporphyrinogen IX + 2 CO2 + 2 H2O. Its pathway is porphyrin-containing compound metabolism; protoporphyrin-IX biosynthesis; protoporphyrinogen-IX from coproporphyrinogen-III (O2 route): step 1/1. Functionally, involved in the heme biosynthesis. Catalyzes the aerobic oxidative decarboxylation of propionate groups of rings A and B of coproporphyrinogen-III to yield the vinyl groups in protoporphyrinogen-IX. The chain is Oxygen-dependent coproporphyrinogen-III oxidase from Pectobacterium atrosepticum (strain SCRI 1043 / ATCC BAA-672) (Erwinia carotovora subsp. atroseptica).